A 128-amino-acid chain; its full sequence is uncharacterized protein (128 aa).

Disordered stretches follow at residues 62-83 (LNPSSHPPSPDFPTGSSASPRV) and 101-128 (FAASSSSTAPVTVTDKPVTPAVSKRYQP). The span at 101-114 (FAASSSSTAPVTVT) shows a compositional bias: low complexity.

It localises to the cytoplasm. The protein localises to the nucleus. This is an uncharacterized protein from Saccharomyces cerevisiae (strain ATCC 204508 / S288c) (Baker's yeast).